Reading from the N-terminus, the 341-residue chain is N-acetyl-gamma-glutamyl-phosphate reductase (341 aa).

Residue C163 is part of the active site.

It belongs to the NAGSA dehydrogenase family. Type 1 subfamily.

Its subcellular location is the cytoplasm. The catalysed reaction is N-acetyl-L-glutamate 5-semialdehyde + phosphate + NADP(+) = N-acetyl-L-glutamyl 5-phosphate + NADPH + H(+). It participates in amino-acid biosynthesis; L-arginine biosynthesis; N(2)-acetyl-L-ornithine from L-glutamate: step 3/4. Catalyzes the NADPH-dependent reduction of N-acetyl-5-glutamyl phosphate to yield N-acetyl-L-glutamate 5-semialdehyde. This Idiomarina loihiensis (strain ATCC BAA-735 / DSM 15497 / L2-TR) protein is N-acetyl-gamma-glutamyl-phosphate reductase.